The sequence spans 514 residues: Beta-glucosidase 16 (514 aa).

Residues 1–21 form the signal peptide; sequence MRGKFLSLLLLITLACIGVSA. Gln-49 is a binding site for a beta-D-glucoside. The N-linked (GlcNAc...) asparagine glycan is linked to Asn-80. A beta-D-glucoside contacts are provided by residues His-153 and 198 to 199; that span reads NE. Glu-199 acts as the Proton donor in catalysis. A disulfide bridge connects residues Cys-218 and Cys-226. An a beta-D-glucoside-binding site is contributed by Tyr-343. An N-linked (GlcNAc...) asparagine glycan is attached at Asn-357. Residues Glu-413, Trp-458, 465–466, and Phe-474 contribute to the a beta-D-glucoside site; that span reads EW. Glu-413 acts as the Nucleophile in catalysis.

The protein belongs to the glycosyl hydrolase 1 family. In terms of tissue distribution, expressed at low levels in cauline leaves and flowers.

The enzyme catalyses Hydrolysis of terminal, non-reducing beta-D-glucosyl residues with release of beta-D-glucose.. The sequence is that of Beta-glucosidase 16 from Arabidopsis thaliana (Mouse-ear cress).